Here is a 325-residue protein sequence, read N- to C-terminus: Tagatose 1,6-diphosphate aldolase 1 (325 aa).

The protein belongs to the aldolase LacD family.

The enzyme catalyses D-tagatofuranose 1,6-bisphosphate = D-glyceraldehyde 3-phosphate + dihydroxyacetone phosphate. It participates in carbohydrate metabolism; D-tagatose 6-phosphate degradation; D-glyceraldehyde 3-phosphate and glycerone phosphate from D-tagatose 6-phosphate: step 2/2. The polypeptide is Tagatose 1,6-diphosphate aldolase 1 (lacD1) (Streptococcus pyogenes serotype M3 (strain ATCC BAA-595 / MGAS315)).